The sequence spans 301 residues: MNKIISILKPTGMTSHDVVSRVRKILNIKKVGHTGTLDPDASGVLPICIGKATKVCEVILNKDKSYICELTLGISTDTYDASGEILKKVDDFKFSNEDIERAFDTQRGEINQLPPIYSALKVNGKRMCDLVRSGRQSEITLKTRRVNIKDIKILSIKGNKVMFYVECSKGTYVRSICHDIGEYLGCGAHMSFLNRTSSGKFDLDNSITLEELELFYENKTLDKYLYDIDYVLDSFNYVVLNPNAIKYYSNGGSIDDKRFLKNNFDKDDEFVRVYSTDNFLGLGKLSKHNNTISVKSDKMFI.

The active-site Nucleophile is the D38.

This sequence belongs to the pseudouridine synthase TruB family. Type 1 subfamily.

The catalysed reaction is uridine(55) in tRNA = pseudouridine(55) in tRNA. Responsible for synthesis of pseudouridine from uracil-55 in the psi GC loop of transfer RNAs. This chain is tRNA pseudouridine synthase B, found in Clostridioides difficile (strain 630) (Peptoclostridium difficile).